Reading from the N-terminus, the 562-residue chain is Dihydroxy-acid dehydratase (562 aa).

Aspartate 78 lines the Mg(2+) pocket. A [2Fe-2S] cluster-binding site is contributed by cysteine 119. The Mg(2+) site is built by aspartate 120 and lysine 121. Lysine 121 is modified (N6-carboxylysine). Cysteine 192 provides a ligand contact to [2Fe-2S] cluster. Position 450 (glutamate 450) interacts with Mg(2+). The Proton acceptor role is filled by serine 476.

Belongs to the IlvD/Edd family. In terms of assembly, homodimer. It depends on [2Fe-2S] cluster as a cofactor. Requires Mg(2+) as cofactor.

It catalyses the reaction (2R)-2,3-dihydroxy-3-methylbutanoate = 3-methyl-2-oxobutanoate + H2O. The catalysed reaction is (2R,3R)-2,3-dihydroxy-3-methylpentanoate = (S)-3-methyl-2-oxopentanoate + H2O. It functions in the pathway amino-acid biosynthesis; L-isoleucine biosynthesis; L-isoleucine from 2-oxobutanoate: step 3/4. It participates in amino-acid biosynthesis; L-valine biosynthesis; L-valine from pyruvate: step 3/4. Functionally, functions in the biosynthesis of branched-chain amino acids. Catalyzes the dehydration of (2R,3R)-2,3-dihydroxy-3-methylpentanoate (2,3-dihydroxy-3-methylvalerate) into 2-oxo-3-methylpentanoate (2-oxo-3-methylvalerate) and of (2R)-2,3-dihydroxy-3-methylbutanoate (2,3-dihydroxyisovalerate) into 2-oxo-3-methylbutanoate (2-oxoisovalerate), the penultimate precursor to L-isoleucine and L-valine, respectively. The protein is Dihydroxy-acid dehydratase of Nautilia profundicola (strain ATCC BAA-1463 / DSM 18972 / AmH).